The following is a 545-amino-acid chain: Tetrahydrocannabinolic acid synthase (545 aa).

Residues 1 to 28 (MNCSAFSFWFVCKIIFFFLSFHIQISIA) form the signal peptide. An intrachain disulfide couples Cys-37 to Cys-99. Asn-65 and Asn-89 each carry an N-linked (GlcNAc...) asparagine glycan. The 175-residue stretch at 77–251 (TTPKPLVIVT…AAWKIKLVAV (175 aa)) folds into the FAD-binding PCMH-type domain. FAD-binding positions include 109–115 (TRSGGHD) and Ser-120. The 6-(S-cysteinyl)-8alpha-(pros-histidyl)-FAD (His-Cys) cross-link spans 114 to 176 (HDAEGMSYIS…ENLSFPGGYC (63 aa)). Asn-168 carries N-linked (GlcNAc...) asparagine glycosylation. FAD is bound by residues Cys-176, 180-184 (GVGGH), Tyr-190, Glu-236, and Ile-241. His-292 serves as a coordination point for cannabigerolate. N-linked (GlcNAc...) asparagine glycosylation is found at Asn-297, Asn-305, and Asn-329. The cannabigerolate site is built by Tyr-417 and Glu-442. Asn-467 is a glycosylation site (N-linked (GlcNAc...) asparagine). 481-483 (YLN) contributes to the FAD binding site. The active-site Proton acceptor is the Tyr-484. Asn-499 is a glycosylation site (N-linked (GlcNAc...) asparagine).

The protein belongs to the oxygen-dependent FAD-linked oxidoreductase family. Monomer. FAD serves as cofactor. In terms of processing, glycosylated when produced in a heterologous system. The deglycosylated THCA synthase has more catalytic activity than the glycosylated form. Post-translationally, the FAD cofactor is bound via a bicovalent 6-S-cysteinyl, 8alpha-N1-histidyl FAD linkage. In terms of tissue distribution, expressed in the secretory cells of glandular trichomes.

It is found in the secreted. The protein localises to the extracellular space. The protein resides in the apoplast. It catalyses the reaction cannabigerolate + O2 = Delta(9)-tetrahydrocannabinolate + H2O2. It functions in the pathway secondary metabolite biosynthesis; terpenoid biosynthesis. Inhibited by Hg(2+). In terms of biological role, oxidoreductase involved in the biosynthesis of cannabinoids-related terpenophenolic natural products, which have pharmacological activity. Catalyzes the oxidative cyclization of the monoterpene moiety in cannabigerolic acid (CBGA), producing delta(9)-tetrahydrocannabinolate (THCA), the major cannabioid in drug-type Cannabis plants. Can also use cannabinerolic acid as substrate, but not cannabigerol or cannabinerol. The polypeptide is Tetrahydrocannabinolic acid synthase (Cannabis sativa (Hemp)).